A 155-amino-acid polypeptide reads, in one-letter code: MDVGLTVLDHRLLSEEPWPNGSLAVMELPLSADQRTVLRGRRRTACGRDVLLQLPRERALMPGDRLTDAHEQVHVLVTAALEELLRVEAATPLALLEAAYHLGNRHVALELHEDELLLLNDSVLETMLKGRGLKLTRCCRSFMPEGGAYIAHQHA.

This sequence belongs to the UreE family.

It is found in the cytoplasm. Its function is as follows. Involved in urease metallocenter assembly. Binds nickel. Probably functions as a nickel donor during metallocenter assembly. The polypeptide is Urease accessory protein UreE (Synechococcus sp. (strain CC9311)).